Consider the following 293-residue polypeptide: MMRIALFLITNLAVMLVFGLVLSLTGIQSSSVQGLMIMAGLFGFGGAFVSLLMSKWMALRSVGGEVIEQPRNETERWLVETVRTQSQQAGIAMPQVAIYHAPDINAFATGARRDASLVAVSTGLLQNMSRDEAEAVIAHEISHIANGDMVTMTLVQGIVNTFVIFVSRLIAQVVSGFLSGNRDEGESSNGNPLVYFAVATVLELVFGILASIITMWFSRYREFHADAGSAKLVGREKMIAALQRLKTSYEPQEESSMMAFCINGKSKSFSELFMSHPPLDKRIEALRSGDYLK.

A run of 2 helical transmembrane segments spans residues 4–24 (IALFLITNLAVMLVFGLVLSL) and 34–54 (GLMIMAGLFGFGGAFVSLLMS). Residue His-139 coordinates Zn(2+). The active site involves Glu-140. His-143 provides a ligand contact to Zn(2+). 2 helical membrane passes run 158 to 178 (IVNTFVIFVSRLIAQVVSGFL) and 193 to 213 (LVYFAVATVLELVFGILASII). Position 222 (Glu-222) interacts with Zn(2+).

It belongs to the peptidase M48B family. Zn(2+) serves as cofactor.

It is found in the cell inner membrane. The chain is Protease HtpX from Pectobacterium carotovorum subsp. carotovorum (strain PC1).